Reading from the N-terminus, the 365-residue chain is Oligosaccharides import ATP-binding protein MsmX (365 aa).

Residues 4 to 235 enclose the ABC transporter domain; that stretch reads LRMEHIYKFY…PENVFVGGFI (232 aa). Position 37–44 (37–44) interacts with ATP; the sequence is GPSGCGKS.

It belongs to the ABC transporter superfamily. The complex involved in maltodextrin import is composed of two ATP-binding proteins (MsmX), two transmembrane proteins (MdxF and MdxG) and a solute-binding protein (MdxE). The complex involved in arabinooligosaccharides uptake is composed of two ATP-binding proteins (MsmX), two transmembrane proteins (AraP and AraQ) and a solute-binding protein (AraN). The complex involved in galactooligosaccharides uptake is composed of two ATP-binding proteins (MsmX), two transmembrane proteins (GanP and GanQ) and a solute-binding protein (GanS). The complex involved in melibiose, raffinose and stachyose import is composed of two ATP-binding proteins (MsmX), two transmembrane proteins (MelC and MelD) and a solute-binding protein (MelE). The complex involved in polygalacturonan and rhamnogalacturonan type I uptake is probably composed of two ATP-binding proteins (MsmX), two transmembrane proteins (YtcP and YteP) and a solute-binding protein (YtcQ).

It localises to the cell membrane. Required to energize different ABC-type saccharide transporters. Part of the MdxEFG-MsmX ABC transporter complex involved in maltodextrin import, of the AraNPQ-MsmX complex involved in arabinooligosaccharides import, of the GanPQS-MsmX complex involved in galactooligosaccharides import, and of the MelEDC-MsmX complex involved in melibiose, raffinose and stachyose import. Is probably also part of the ABC transporter complex YtcQP-YteP-MsmX involved in polygalacturonan and rhamnogalacturonan type I import during pectin degradation. Responsible for energy coupling to the transport system. This is Oligosaccharides import ATP-binding protein MsmX (msmX) from Bacillus subtilis (strain 168).